A 275-amino-acid polypeptide reads, in one-letter code: Nitrogenase iron protein 3 (275 aa).

Position 9 to 16 (9 to 16 (GKGGIGKS)) interacts with ATP. Residue Cys97 coordinates [4Fe-4S] cluster. At Arg100 the chain carries ADP-ribosylarginine; by dinitrogenase reductase ADP-ribosyltransferase. Cys132 is a binding site for [4Fe-4S] cluster.

It belongs to the NifH/BchL/ChlL family. As to quaternary structure, homodimer. It depends on [4Fe-4S] cluster as a cofactor. In terms of processing, the reversible ADP-ribosylation of Arg-100 inactivates the nitrogenase reductase and regulates nitrogenase activity.

The catalysed reaction is N2 + 8 reduced [2Fe-2S]-[ferredoxin] + 16 ATP + 16 H2O = H2 + 8 oxidized [2Fe-2S]-[ferredoxin] + 2 NH4(+) + 16 ADP + 16 phosphate + 6 H(+). The key enzymatic reactions in nitrogen fixation are catalyzed by the nitrogenase complex, which has 2 components: the iron protein (component 2) and a component 1 which is either a molybdenum-iron protein, a vanadium-iron, or an iron-iron protein. The sequence is that of Nitrogenase iron protein 3 (anfH) from Azotobacter vinelandii.